Consider the following 148-residue polypeptide: Lipid droplet organization protein LDO16 (148 aa).

The Cytoplasmic portion of the chain corresponds to 1-7 (MVSTATF). The chain crosses the membrane as a helical span at residues 8 to 28 (FFFVYLTLFVVIGFFSSLFII). P29 is a topological domain (lumenal). The helical transmembrane segment at 30–50 (LLGISFVFAIGVVSFGFCSNM) threads the bilayer. Residues 51-148 (SFKMAQLIYV…NKAGNKFQLS (98 aa)) lie on the Cytoplasmic side of the membrane. The interval 83–110 (QEPQEPLSTLRPVSNPTIPSPLRQTARP) is disordered. Over residues 93–109 (RPVSNPTIPSPLRQTAR) the composition is skewed to polar residues. S102 is modified (phosphoserine).

Belongs to the OSW5 family. As to quaternary structure, interacts specifically with the seipin complex FLD1-LDB16. Only a fraction appears to associate with the seipin core components, suggesting that it may be an ancillary subunit of the complex. Found to interact with many mitochondrial and peroxisomal proteins.

The protein resides in the endoplasmic reticulum membrane. It is found in the lipid droplet. Involved in lipid droplet (LD) organization. Functions primarily upon nutrient depletion, facilitating LD consumption by lipophagy. Required for correct LD distribution during entry into stationary phase, where LDs accumulate at nucleus-vacuole junction (NVJ) contact sites. Involved in membrane interaction in a manner similar to those of SNARE proteins, binding to partners present in mitochondria or peroxisomes. Its partner on the mitochondrion side might be TOM22, a mitochondrial outer membrane protein, linking lipid droplets and mitochondria by protein-protein interaction. Involved in spore wall assembly. This chain is Lipid droplet organization protein LDO16, found in Saccharomyces cerevisiae (strain ATCC 204508 / S288c) (Baker's yeast).